The chain runs to 246 residues: Uridylate kinase (246 aa).

11–14 (KLSG) contributes to the ATP binding site. Glycine 53 is a binding site for UMP. The ATP site is built by glycine 54 and arginine 58. UMP-binding positions include aspartate 73 and 134 to 141 (TGNPYFTT). ATP-binding residues include threonine 161, tyrosine 167, and aspartate 170.

This sequence belongs to the UMP kinase family. In terms of assembly, homohexamer.

The protein resides in the cytoplasm. It catalyses the reaction UMP + ATP = UDP + ADP. It participates in pyrimidine metabolism; CTP biosynthesis via de novo pathway; UDP from UMP (UMPK route): step 1/1. Inhibited by UTP. In terms of biological role, catalyzes the reversible phosphorylation of UMP to UDP. The chain is Uridylate kinase from Leptospira borgpetersenii serovar Hardjo-bovis (strain JB197).